The sequence spans 409 residues: MKEKVVLAYSGGLDTSVILKWLCEKGFDVIAYVANVGQKDDFDAIKEKALKTGASKVYVEDLRREFVTDYIFTALLGNAMYEGRYLLGTAIARPLIAKRQVEIAEKEGAQYVAHGATGKGNDQVRFELTYAALNPNLKVISPWKDPEFLAKFKGRTDLINYAMEKGIPIKVSKKRPYSEDENLMHISHEAGKLEDPAYIPDEDVFTWTVSPKDAPDEETLLEIHFENGIPVKVVNLKDGTEKTDPLELFEYLNEVGAKNGVGRLDMVENRFIGIKSRGVYETPGATILWTAHRDLEGITMDKEVMHLRDMLAPKFAELIYNGFWFSPEMEFLLAAFRKAQENVTGKVTVSIYKGNVMPVARYSPYSLYNPELSSMDVEGGFNATDSKGFINIHALRLKVHQLVKKGYQK.

ATP contacts are provided by residues 8–16 (AYSGGLDTS) and Ala34. Tyr85 lines the L-citrulline pocket. Residue Gly115 participates in ATP binding. L-aspartate-binding residues include Thr117, Asn121, and Asp122. Asn121 is an L-citrulline binding site. L-citrulline contacts are provided by Arg125, Ser178, Ser187, Glu268, and Tyr280.

It belongs to the argininosuccinate synthase family. Type 1 subfamily. As to quaternary structure, homotetramer.

It localises to the cytoplasm. It carries out the reaction L-citrulline + L-aspartate + ATP = 2-(N(omega)-L-arginino)succinate + AMP + diphosphate + H(+). Its pathway is amino-acid biosynthesis; L-arginine biosynthesis; L-arginine from L-ornithine and carbamoyl phosphate: step 2/3. The sequence is that of Argininosuccinate synthase from Thermotoga sp. (strain RQ2).